We begin with the raw amino-acid sequence, 262 residues long: Tryptophan synthase alpha chain (262 aa).

Catalysis depends on proton acceptor residues Glu-48 and Asp-59.

Belongs to the TrpA family. Tetramer of two alpha and two beta chains.

The catalysed reaction is (1S,2R)-1-C-(indol-3-yl)glycerol 3-phosphate + L-serine = D-glyceraldehyde 3-phosphate + L-tryptophan + H2O. It functions in the pathway amino-acid biosynthesis; L-tryptophan biosynthesis; L-tryptophan from chorismate: step 5/5. Functionally, the alpha subunit is responsible for the aldol cleavage of indoleglycerol phosphate to indole and glyceraldehyde 3-phosphate. This Helicobacter pylori (strain G27) protein is Tryptophan synthase alpha chain.